We begin with the raw amino-acid sequence, 293 residues long: Probable xyloglucan endotransglucosylase/hydrolase protein B (293 aa).

The signal sequence occupies residues 1–21 (MASSLLILCLVLVSLASSALC). The GH16 domain occupies 23-220 (APRRPVDVPF…WSKAPFVAEY (198 aa)). The active-site Nucleophile is the Glu106. The active-site Proton donor is the Glu110. Glu110 is a xyloglucan binding site. The N-linked (GlcNAc...) asparagine glycan is linked to Asn114. Xyloglucan-binding positions include 123-125 (QTN), 133-135 (DRE), 199-200 (DW), and Gly204. 2 disulfides stabilise this stretch: Cys228–Cys237 and Cys274–Cys287. Residue Arg279 participates in xyloglucan binding.

This sequence belongs to the glycosyl hydrolase 16 family. XTH group 1 subfamily. Post-translationally, contains at least one intrachain disulfide bond essential for its enzymatic activity. As to expression, predominantly expressed in the phloem fibers of growing internodes. Weakly or not expressed in the xylem. In the internode, it is expressed closer to the bottom of the internode compared to XTHA.

The protein resides in the secreted. It is found in the cell wall. It localises to the extracellular space. The protein localises to the apoplast. The catalysed reaction is breaks a beta-(1-&gt;4) bond in the backbone of a xyloglucan and transfers the xyloglucanyl segment on to O-4 of the non-reducing terminal glucose residue of an acceptor, which can be a xyloglucan or an oligosaccharide of xyloglucan.. Functionally, catalyzes xyloglucan endohydrolysis (XEH) and/or endotransglycosylation (XET). Cleaves and religates xyloglucan polymers, an essential constituent of the primary cell wall, and thereby participates in cell wall construction of growing tissues. The sequence is that of Probable xyloglucan endotransglucosylase/hydrolase protein B (XTHB) from Phaseolus angularis (Azuki bean).